Here is a 335-residue protein sequence, read N- to C-terminus: Olfactory receptor 10R2 (335 aa).

Residues 1 to 45 (MPQILIFTYLNMFYFFPPLQILAENLTMVTEFLLLGFSSLGEIQL) are Extracellular-facing. The N-linked (GlcNAc...) asparagine glycan is linked to Asn-25. Residues 46 to 66 (ALFVVFLFLYLVILSGNVTII) form a helical membrane-spanning segment. Topologically, residues 67 to 74 (SVIHLDKS) are cytoplasmic. Residues 75–95 (LHTPMYFFLGILSTSETFYTF) form a helical membrane-spanning segment. Residues 96 to 119 (VILPKMLINLLSVARTISFNCCAL) lie on the Extracellular side of the membrane. Cys-117 and Cys-209 form a disulfide bridge. The chain crosses the membrane as a helical span at residues 120–140 (QMFFFLGFAITNCLLLGVMGY). At 141–159 (DRYAAICHPLHYPTLMSWQ) the chain is on the cytoplasmic side. Residues 160 to 180 (VCGKLAAACAIGGFLASLTVV) traverse the membrane as a helical segment. At 181 to 217 (NLVFSLPFCSANKVNHYFCDISAVILLACTNTDVNEF) the chain is on the extracellular side. Residues 218–237 (VIFICGVLVLVVPFLFICVS) form a helical membrane-spanning segment. Topologically, residues 238 to 257 (YLCILRTILKIPSAEGRRKA) are cytoplasmic. The chain crosses the membrane as a helical span at residues 258–278 (FSTCASHLSVVIVHYGCASFI). At 279-291 (YLRPTANYVSNKD) the chain is on the extracellular side. Residues 292 to 312 (RLVTVTYTIVTPLLNPMVYSL) form a helical membrane-spanning segment. Over 313-335 (RNKDVQLAIRKVLGKKGSLKLYN) the chain is Cytoplasmic.

Belongs to the G-protein coupled receptor 1 family.

The protein localises to the cell membrane. Odorant receptor. In Homo sapiens (Human), this protein is Olfactory receptor 10R2 (OR10R2).